We begin with the raw amino-acid sequence, 337 residues long: uncharacterized protein (337 aa).

Residues 3–174 (IAVRGGHNFK…IGKLIAEAIN (172 aa)) enclose the MurNAc-LAA domain.

This sequence to C.perfringens pIP404 ORF10.

This is an uncharacterized protein from Clostridium perfringens (strain 13 / Type A).